The following is a 378-amino-acid chain: Spermatogenic leucine zipper protein 1 (378 aa).

The segment at 1-31 (MSDTDNSAEMPARCPSPNPAPGAKQEPPNSG) is disordered. Ser106 is subject to Phosphoserine. Residues 116 to 122 (KNKIRFK) form an interaction with PPP1CC isoform gamma-2 region. Positions 116-127 (KNKIRFKDDLFI) are helix-loop-helix motif. The segment at 128–193 (HFDPEREQNT…HLRGEYRKLR (66 aa)) is basic motif. The stretch at 182-233 (SLHLRGEYRKLRNNMEQLLQEADHWSKQHNELSELMRSYQECQNETQETTDK) forms a coiled coil. Ser207 is modified (phosphoserine). Residues 252–273 (LEEQVKKLSHDTHALHLIAALL) form a leucine-zipper region.

As to quaternary structure, interacts with PPP1CC isoform gamma-2. This interaction can prevent SPZ1 binding to the E-box and inhibits PPP1CC activity. Post-translationally, phosphorylated by MAPK1/ERK2 and MAPK3/ERK1. In terms of tissue distribution, expressed specifically in the testis and epidydimis. In the testis expressed in both germ cells and somatic cells (Sertoli and Leydig cells). Expressed in several tumor cell lines.

The protein resides in the cytoplasm. The protein localises to the nucleus. In terms of biological role, transcription factor that binds to the DNA sequence 5'-CANNTG-3'(E box) and the G-box motif. Directly binds to a guanine-rich region of the PCNA promoter and up-regulates its expression which in turn induces cell transformation and tumor formation. May play an important role in the regulation of cell proliferation and differentiation during spermatogenesis. This Mus musculus (Mouse) protein is Spermatogenic leucine zipper protein 1 (Spz1).